The following is a 1076-amino-acid chain: Probable cellulose synthase A catalytic subunit 1 [UDP-forming] (1076 aa).

Residues 1 to 267 (MAANAGMVAG…SRIVPIPSNQ (267 aa)) are Cytoplasmic-facing. 8 residues coordinate Zn(2+): cysteine 41, cysteine 44, cysteine 60, cysteine 63, cysteine 68, cysteine 71, cysteine 83, and cysteine 86. The RING-type; degenerate zinc-finger motif lies at 41 to 87 (CQICGDTVGVSATGDVFVACNECAFPVCRPCYEYERKEGNQCCPQCK). The segment at 119 to 179 (HGNGKGPEWQ…HSIRSGTSSY (61 aa)) is disordered. A helical membrane pass occupies residues 268 to 288 (LNLYRIVIILRLIILMFFFQY). Over 289 to 296 (RVTHPVRD) the chain is Extracellular. A helical transmembrane segment spans residues 297–317 (AYGLWLVSVICEIWFALSWLL). Residues 318-851 (DQFPKWYPIN…LLERLAYINT (534 aa)) lie on the Cytoplasmic side of the membrane. Residues serine 356, lysine 362, glutamate 363, and aspartate 392 each contribute to the UDP-alpha-D-glucose site. The active site involves aspartate 392. Positions 446 to 473 (VKERRAMKREYEEFKVRINALVAKAQKV) form a coiled coil. Lysine 533 provides a ligand contact to UDP-alpha-D-glucose. Mn(2+) is bound by residues lysine 534 and aspartate 558. The active site involves aspartate 775. The helical transmembrane segment at 852–872 (IVYPITSIPLIAYCVLPAICL) threads the bilayer. At 873-884 (LTNKFIIPEISN) the chain is on the extracellular side. The chain crosses the membrane as a helical span at residues 885–905 (YAGMFFILLFASIFATGILEL). Residues 906-920 (RWSGVGIEDWWRNEQ) are Cytoplasmic-facing. Residues 921-941 (FWVIGGTSAHLFAVFQGLLKV) form a helical membrane-spanning segment. Topologically, residues 942-971 (LAGIDTNFTVTSKASDEDGDFAELYVFKWT) are extracellular. N-linked (GlcNAc...) asparagine glycosylation occurs at asparagine 948. A helical membrane pass occupies residues 972–992 (SLLIPPTTVLVINLVGMVAGI). Residues 993–1003 (SYAINSGYQSW) are Cytoplasmic-facing. Residues 1004–1024 (GPLFGKLFFSIWVILHLYPFL) traverse the membrane as a helical segment. Residues 1025–1033 (KGLMGRQNR) lie on the Extracellular side of the membrane. A helical membrane pass occupies residues 1034 to 1054 (TPTIVIVWSILLASIFSLLWV). Residues 1055–1076 (KIDPFISPTQKAVALGQCGVNC) are Cytoplasmic-facing.

The protein belongs to the glycosyltransferase 2 family. Plant cellulose synthase subfamily. Requires Zn(2+) as cofactor. Mn(2+) is required as a cofactor.

The protein resides in the cell membrane. It carries out the reaction [(1-&gt;4)-beta-D-glucosyl](n) + UDP-alpha-D-glucose = [(1-&gt;4)-beta-D-glucosyl](n+1) + UDP + H(+). The protein operates within glycan metabolism; plant cellulose biosynthesis. Catalytic subunit of cellulose synthase terminal complexes ('rosettes'), required for beta-1,4-glucan microfibril crystallization, a major mechanism of the cell wall formation. The polypeptide is Probable cellulose synthase A catalytic subunit 1 [UDP-forming] (CESA1) (Oryza sativa subsp. indica (Rice)).